The primary structure comprises 507 residues: ATP synthase subunit alpha, mitochondrial (507 aa).

171-178 (GDRQTGKT) provides a ligand contact to ATP.

This sequence belongs to the ATPase alpha/beta chains family. In terms of assembly, F-type ATPases have 2 components, CF(1) - the catalytic core - and CF(0) - the membrane proton channel. CF(1) has five subunits: alpha(3), beta(3), gamma(1), delta(1), epsilon(1). CF(0) has three main subunits: a, b and c.

The protein resides in the mitochondrion. It is found in the mitochondrion inner membrane. Functionally, mitochondrial membrane ATP synthase (F(1)F(0) ATP synthase or Complex V) produces ATP from ADP in the presence of a proton gradient across the membrane which is generated by electron transport complexes of the respiratory chain. F-type ATPases consist of two structural domains, F(1) - containing the extramembraneous catalytic core, and F(0) - containing the membrane proton channel, linked together by a central stalk and a peripheral stalk. During catalysis, ATP synthesis in the catalytic domain of F(1) is coupled via a rotary mechanism of the central stalk subunits to proton translocation. Subunits alpha and beta form the catalytic core in F(1). Rotation of the central stalk against the surrounding alpha(3)beta(3) subunits leads to hydrolysis of ATP in three separate catalytic sites on the beta subunits. Subunit alpha does not bear the catalytic high-affinity ATP-binding sites. This Arabidopsis thaliana (Mouse-ear cress) protein is ATP synthase subunit alpha, mitochondrial (ATPA).